Consider the following 390-residue polypeptide: MSIQPSITAAPARSLHFAEVLMARESITPVDAGCQSYLMYKLEKLGFVCERHTINGVKNLIAKWGGGPLHFAFSGHTDVVPPGPLEKWKSPPFSPVVSQNKLYGRGAADMKTGISAMLAATERAIASLDEREVTYWWLITSDEEGEAEWGSKWINEYLTKRNVQLDMCLVGEPSATTQTGDTIKVGRRGSLSGTITVAGKQGHVAYPKTAVNAIHKASNIVNALTHYPFEEGSDDFPGTTLQITHMDTGSFTDNIVPSAVRIEFNVRYSWQYNQGSLAELLRQIISSVDMSALVSFSRPCEAYLSKPHNNAKRCLITSVEKAIKAATGRYPVISTSGGTSDGRFYASEKTQVVEVGVPNATIHQVNEHIHLSDLLTLEDIYTDILLSLSK.

H76 lines the Zn(2+) pocket. D78 is a catalytic residue. D109 contacts Zn(2+). E143 serves as the catalytic Proton acceptor. Zn(2+)-binding residues include E144, E172, and H363.

It belongs to the peptidase M20A family. DapE subfamily. As to quaternary structure, homodimer. Zn(2+) serves as cofactor. It depends on Co(2+) as a cofactor.

The catalysed reaction is N-succinyl-(2S,6S)-2,6-diaminopimelate + H2O = (2S,6S)-2,6-diaminopimelate + succinate. Its pathway is amino-acid biosynthesis; L-lysine biosynthesis via DAP pathway; LL-2,6-diaminopimelate from (S)-tetrahydrodipicolinate (succinylase route): step 3/3. Its function is as follows. Catalyzes the hydrolysis of N-succinyl-L,L-diaminopimelic acid (SDAP), forming succinate and LL-2,6-diaminopimelate (DAP), an intermediate involved in the bacterial biosynthesis of lysine and meso-diaminopimelic acid, an essential component of bacterial cell walls. This Alteromonas mediterranea (strain DSM 17117 / CIP 110805 / LMG 28347 / Deep ecotype) protein is Succinyl-diaminopimelate desuccinylase 1.